The following is a 614-amino-acid chain: Baeyer-Villiger monooxygenase peniC (614 aa).

FAD is bound by residues Glu-99, 107–110 (TWHW), Asp-119, and Tyr-125. Residues 255–261 (TGASGVQ), 278–279 (RT), and 398–399 (KR) contribute to the NADP(+) site.

Belongs to the FAD-binding monooxygenase family. FAD is required as a cofactor.

The enzyme catalyses gamma-lactone-2-keto[5.5.5.5]fenestrane + NADPH + O2 + H(+) = penifulvin A + NADP(+) + H2O. Its pathway is secondary metabolite biosynthesis; terpenoid biosynthesis. Its function is as follows. Baeyer-Villiger monooxygenase; part of the gene cluster that mediates the biosynthesis of penifulvin A, a potent insecticidal sesquiterpene that features a [5.5.5.6]dioxafenestrane ring. Within the pathway, peniC is responsible for the final regioselective Baeyer-Villiger oxidation of gamma-lactone-2-keto[5.5.5.5]fenestran between C1 and C2 to form the delta-lactone moiety of penifulvin A. The first step of the pathway is performed by the sesquiterpene cyclase peniA that generates the angular triquinane scaffold silphinene via cyclization of the linear farnesyl pyrophosphate (FPP). The cytochrome P450 monooxygenase peniB and the flavin-dependent monooxygenase peniC then catalyze a series of oxidation reactions to transform silphinene into penifulvin A. The chain is Baeyer-Villiger monooxygenase peniC from Penicillium patulum (Penicillium griseofulvum).